An 82-amino-acid polypeptide reads, in one-letter code: DNA gyrase inhibitor YacG (82 aa).

Residues Cys9, Cys12, Cys27, and Cys31 each contribute to the Zn(2+) site. Residues 44 to 82 are disordered; that stretch reads IGLPHEGDPGDAPVEYLDDRDLTQPSPERQNESFHRYSE. Over residues 72–82 the composition is skewed to basic and acidic residues; it reads RQNESFHRYSE.

It belongs to the DNA gyrase inhibitor YacG family. As to quaternary structure, interacts with GyrB. It depends on Zn(2+) as a cofactor.

In terms of biological role, inhibits all the catalytic activities of DNA gyrase by preventing its interaction with DNA. Acts by binding directly to the C-terminal domain of GyrB, which probably disrupts DNA binding by the gyrase. In Rhodopirellula baltica (strain DSM 10527 / NCIMB 13988 / SH1), this protein is DNA gyrase inhibitor YacG.